The following is a 459-amino-acid chain: Exodeoxyribonuclease 7 large subunit (459 aa).

This sequence belongs to the XseA family. Heterooligomer composed of large and small subunits.

Its subcellular location is the cytoplasm. It carries out the reaction Exonucleolytic cleavage in either 5'- to 3'- or 3'- to 5'-direction to yield nucleoside 5'-phosphates.. Bidirectionally degrades single-stranded DNA into large acid-insoluble oligonucleotides, which are then degraded further into small acid-soluble oligonucleotides. The polypeptide is Exodeoxyribonuclease 7 large subunit (Pseudomonas entomophila (strain L48)).